A 496-amino-acid polypeptide reads, in one-letter code: Genome polyprotein (496 aa).

The Extracellular segment spans residues 1-447 (SRCTHLENRD…HTVLGGAFNS (447 aa)). 6 cysteine pairs are disulfide-bonded: C3/C30, C60/C116, C60/C121, C74/C105, C92/C116, and C92/C121. The segment at 98–111 (DRGWGNHCGLFGKG) is fusion peptide. A glycan (N-linked (GlcNAc...) asparagine; by host) is linked at N154. Cystine bridges form between C186/C290 and C307/C338. Residues 448–468 (IFGGVGFLPKLLMGVALAWLG) form a helical membrane-spanning segment. Topologically, residues 469–479 (LNTRNPTMSMS) are cytoplasmic. Residues 480-496 (FLLAGGLVLAMTLGVGA) form a helical membrane-spanning segment.

As to quaternary structure, homodimer; in the endoplasmic reticulum and Golgi. In terms of processing, N-glycosylated.

The protein localises to the virion membrane. It is found in the host endoplasmic reticulum membrane. Its function is as follows. Binds to host cell surface receptor and mediates fusion between viral and cellular membranes. Envelope protein is synthesized in the endoplasmic reticulum in the form of heterodimer with protein prM. They play a role in virion budding in the ER, and the newly formed immature particle is covered with 60 spikes composed of heterodimer between precursor prM and envelope protein E. The virion is transported to the Golgi apparatus where the low pH causes dissociation of PrM-E heterodimers and formation of E homodimers. prM-E cleavage is ineficient, and many virions are only partially matured. These uncleaved prM would play a role in immune evasion. The protein is Genome polyprotein of Bos taurus (Bovine).